We begin with the raw amino-acid sequence, 389 residues long: Phospho-N-acetylmuramoyl-pentapeptide-transferase (389 aa).

10 helical membrane passes run 25 to 45 (RAVM…PWVI), 73 to 93 (TMGG…WGDL), 97 to 117 (FIWI…VDDY), 135 to 155 (FWQS…VSEA), 190 to 210 (ISYP…IVGA), 222 to 242 (GLVI…AYVM), 258 to 278 (GAGE…AFLW), 286 to 306 (VFMG…VAVI), 311 to 331 (IVLF…MLQV), and 366 to 386 (QVVV…LTTL).

Belongs to the glycosyltransferase 4 family. MraY subfamily. Mg(2+) is required as a cofactor.

It localises to the cell inner membrane. The enzyme catalyses UDP-N-acetyl-alpha-D-muramoyl-L-alanyl-gamma-D-glutamyl-meso-2,6-diaminopimeloyl-D-alanyl-D-alanine + di-trans,octa-cis-undecaprenyl phosphate = di-trans,octa-cis-undecaprenyl diphospho-N-acetyl-alpha-D-muramoyl-L-alanyl-D-glutamyl-meso-2,6-diaminopimeloyl-D-alanyl-D-alanine + UMP. Its pathway is cell wall biogenesis; peptidoglycan biosynthesis. In terms of biological role, catalyzes the initial step of the lipid cycle reactions in the biosynthesis of the cell wall peptidoglycan: transfers peptidoglycan precursor phospho-MurNAc-pentapeptide from UDP-MurNAc-pentapeptide onto the lipid carrier undecaprenyl phosphate, yielding undecaprenyl-pyrophosphoryl-MurNAc-pentapeptide, known as lipid I. The polypeptide is Phospho-N-acetylmuramoyl-pentapeptide-transferase (Burkholderia cenocepacia (strain HI2424)).